A 95-amino-acid polypeptide reads, in one-letter code: Large ribosomal subunit protein uL23 (95 aa).

This sequence belongs to the universal ribosomal protein uL23 family. In terms of assembly, part of the 50S ribosomal subunit. Contacts protein L29, and trigger factor when it is bound to the ribosome.

In terms of biological role, one of the early assembly proteins it binds 23S rRNA. One of the proteins that surrounds the polypeptide exit tunnel on the outside of the ribosome. Forms the main docking site for trigger factor binding to the ribosome. The sequence is that of Large ribosomal subunit protein uL23 from Deinococcus deserti (strain DSM 17065 / CIP 109153 / LMG 22923 / VCD115).